The following is a 1409-amino-acid chain: Protein three rows (1409 aa).

The separase cleavage-site stretch occupies residues 1052-1058; that stretch reads VEPIRKQ. Disordered stretches follow at residues 1260-1284 and 1297-1409; these read PIGCSNSSSSSSKSGNENTPPSDHV and DDAA…RQRN. Low complexity-rich tracts occupy residues 1264–1273 and 1300–1310; these read SNSSSSSSKS and ASVSASTPAPS.

As to quaternary structure, interacts with pim and Sse. Cleavage of thr contributes to inactivation of Sse.

It is found in the cytoplasm. Functionally, required specifically for chromosome disjunction during all mitoses; maternally provided protein is sufficient until mitosis 14 then zygotic protein is required. Involved in formation and/or maintenance of epithelial structures: bud extension during Malpighian tubule development, and foregut and hindgut morphogenesis. This is Protein three rows (thr) from Drosophila pseudoobscura pseudoobscura (Fruit fly).